Here is a 217-residue protein sequence, read N- to C-terminus: Uracil-DNA glycosylase (217 aa).

Residue D62 is the Proton acceptor of the active site.

It belongs to the uracil-DNA glycosylase (UDG) superfamily. UNG family.

The protein resides in the cytoplasm. It carries out the reaction Hydrolyzes single-stranded DNA or mismatched double-stranded DNA and polynucleotides, releasing free uracil.. Functionally, excises uracil residues from the DNA which can arise as a result of misincorporation of dUMP residues by DNA polymerase or due to deamination of cytosine. In Streptococcus pyogenes serotype M1, this protein is Uracil-DNA glycosylase.